Here is a 138-residue protein sequence, read N- to C-terminus: DNA-directed RNA polymerase subunit omega (138 aa).

The protein belongs to the RNA polymerase subunit omega family. The RNAP catalytic core consists of 2 alpha, 1 beta, 1 beta' and 1 omega subunit. When a sigma factor is associated with the core the holoenzyme is formed, which can initiate transcription.

The catalysed reaction is RNA(n) + a ribonucleoside 5'-triphosphate = RNA(n+1) + diphosphate. Its function is as follows. Promotes RNA polymerase assembly. Latches the N- and C-terminal regions of the beta' subunit thereby facilitating its interaction with the beta and alpha subunits. The chain is DNA-directed RNA polymerase subunit omega from Thermodesulfovibrio yellowstonii (strain ATCC 51303 / DSM 11347 / YP87).